A 341-amino-acid chain; its full sequence is Anthranilate phosphoribosyltransferase (341 aa).

5-phospho-alpha-D-ribose 1-diphosphate-binding positions include G81, 84 to 85, S89, 91 to 94, 109 to 117, and S121; these read GD, NIST, and KHGNRSASS. An anthranilate-binding site is contributed by G81. S93 provides a ligand contact to Mg(2+). N112 is an anthranilate binding site. R167 is a binding site for anthranilate. D225 and E226 together coordinate Mg(2+).

It belongs to the anthranilate phosphoribosyltransferase family. Homodimer. Mg(2+) serves as cofactor.

It catalyses the reaction N-(5-phospho-beta-D-ribosyl)anthranilate + diphosphate = 5-phospho-alpha-D-ribose 1-diphosphate + anthranilate. The protein operates within amino-acid biosynthesis; L-tryptophan biosynthesis; L-tryptophan from chorismate: step 2/5. Catalyzes the transfer of the phosphoribosyl group of 5-phosphorylribose-1-pyrophosphate (PRPP) to anthranilate to yield N-(5'-phosphoribosyl)-anthranilate (PRA). The polypeptide is Anthranilate phosphoribosyltransferase (Nocardioides sp. (strain ATCC BAA-499 / JS614)).